A 191-amino-acid polypeptide reads, in one-letter code: Putative manganese efflux pump MntP (191 aa).

6 helical membrane passes run 3–23 (PISILLIGFAMSTDAFAAAIG), 37–57 (LRAGIIFGVIEAITPIIGWLL), 65–85 (VEAFDHWIAFGLLGALGIHMI), 107–129 (WKLALTGFATSIDAMAVGIGLAF), 144–164 (CTLTMVTVGIMLGRVLGSMVG), and 169–189 (IIGGVILVIIGATILYEHLHG).

Belongs to the MntP (TC 9.B.29) family.

Its subcellular location is the cell inner membrane. Functionally, probably functions as a manganese efflux pump. This is Putative manganese efflux pump MntP from Stenotrophomonas maltophilia (strain R551-3).